We begin with the raw amino-acid sequence, 198 residues long: Glycerol-3-phosphate acyltransferase (198 aa).

The next 5 membrane-spanning stretches (helical) occupy residues 5-25, 56-76, 84-104, 114-134, and 158-178; these read LILL…LWIG, SIVT…PFFF, FWLL…FAGF, AGVI…VFLV, and LFMG…FVIW.

Belongs to the PlsY family. As to quaternary structure, probably interacts with PlsX.

The protein localises to the cell membrane. The catalysed reaction is an acyl phosphate + sn-glycerol 3-phosphate = a 1-acyl-sn-glycero-3-phosphate + phosphate. It functions in the pathway lipid metabolism; phospholipid metabolism. Catalyzes the transfer of an acyl group from acyl-phosphate (acyl-PO(4)) to glycerol-3-phosphate (G3P) to form lysophosphatidic acid (LPA). This enzyme utilizes acyl-phosphate as fatty acyl donor, but not acyl-CoA or acyl-ACP. The chain is Glycerol-3-phosphate acyltransferase from Listeria monocytogenes serovar 1/2a (strain ATCC BAA-679 / EGD-e).